The sequence spans 340 residues: Ferrochelatase (340 aa).

His-189 and Glu-292 together coordinate Fe cation.

Belongs to the ferrochelatase family.

The protein resides in the cytoplasm. It catalyses the reaction heme b + 2 H(+) = protoporphyrin IX + Fe(2+). Its pathway is porphyrin-containing compound metabolism; protoheme biosynthesis; protoheme from protoporphyrin-IX: step 1/1. Functionally, catalyzes the ferrous insertion into protoporphyrin IX. The chain is Ferrochelatase from Pseudomonas fluorescens (strain ATCC BAA-477 / NRRL B-23932 / Pf-5).